We begin with the raw amino-acid sequence, 200 residues long: Probable nicotinate-nucleotide adenylyltransferase (200 aa).

Belongs to the NadD family.

The enzyme catalyses nicotinate beta-D-ribonucleotide + ATP + H(+) = deamido-NAD(+) + diphosphate. It functions in the pathway cofactor biosynthesis; NAD(+) biosynthesis; deamido-NAD(+) from nicotinate D-ribonucleotide: step 1/1. Catalyzes the reversible adenylation of nicotinate mononucleotide (NaMN) to nicotinic acid adenine dinucleotide (NaAD). In Clavibacter michiganensis subsp. michiganensis (strain NCPPB 382), this protein is Probable nicotinate-nucleotide adenylyltransferase.